The sequence spans 876 residues: Radial spoke head 10 homolog B (876 aa).

Basic and acidic residues-rich tracts occupy residues 1 to 16 (MVKE…DKSA) and 57 to 66 (PKRDSEHTYQ). Residues 1–72 (MVKEKKKADK…HTYQSEDETQ (72 aa)) are disordered. 10 MORN repeats span residues 86 to 108 (YEGE…GGNT), 109 to 131 (YHGM…DGLK), 132 to 154 (YEGD…DGST), 155 to 177 (YEGE…TQPV), 179 to 201 (YIGH…QEGT), 204 to 226 (YEGD…SGNI), 227 to 249 (YEGQ…TTNE), 251 to 273 (YTGH…LKRI), 284 to 306 (YIGA…SGAM), and 307 to 329 (YEGE…NGRV). Disordered regions lie at residues 360–386 (SQRS…LDGS) and 841–876 (EPPE…KKKK). Residues 373–386 (ADREPETLRKLDGS) show a composition bias toward basic and acidic residues. Residues 752-841 (EKYEKSKDEQ…FELDITVLKE (90 aa)) are a coiled coil.

In terms of assembly, interacts with RSPH6A. Does not appear to be part of the axonemal radial spoke complexes 1 or 2.

Its subcellular location is the cytoplasm. The protein localises to the cytoskeleton. The protein resides in the cilium axoneme. It is found in the cell projection. It localises to the cilium. Its subcellular location is the flagellum. Its function is as follows. May function as part of the axonemal radial spoke complex 3 (RS3). Radial spoke complexes are important for ciliary motility. This Rattus norvegicus (Rat) protein is Radial spoke head 10 homolog B (Rsph10b).